Reading from the N-terminus, the 441-residue chain is NADH-quinone oxidoreductase subunit D 1 (441 aa).

This sequence belongs to the complex I 49 kDa subunit family. NDH-1 is composed of 14 different subunits. Subunits NuoB, C, D, E, F, and G constitute the peripheral sector of the complex.

Its subcellular location is the cell membrane. The catalysed reaction is a quinone + NADH + 5 H(+)(in) = a quinol + NAD(+) + 4 H(+)(out). Its function is as follows. NDH-1 shuttles electrons from NADH, via FMN and iron-sulfur (Fe-S) centers, to quinones in the respiratory chain. The immediate electron acceptor for the enzyme in this species is believed to be a menaquinone. Couples the redox reaction to proton translocation (for every two electrons transferred, four hydrogen ions are translocated across the cytoplasmic membrane), and thus conserves the redox energy in a proton gradient. This chain is NADH-quinone oxidoreductase subunit D 1, found in Salinispora tropica (strain ATCC BAA-916 / DSM 44818 / JCM 13857 / NBRC 105044 / CNB-440).